The chain runs to 303 residues: Acetylglutamate kinase (303 aa).

Residues 67-68 (GG), R89, and N193 contribute to the substrate site.

This sequence belongs to the acetylglutamate kinase family. ArgB subfamily.

The protein resides in the cytoplasm. It catalyses the reaction N-acetyl-L-glutamate + ATP = N-acetyl-L-glutamyl 5-phosphate + ADP. The protein operates within amino-acid biosynthesis; L-arginine biosynthesis; N(2)-acetyl-L-ornithine from L-glutamate: step 2/4. Catalyzes the ATP-dependent phosphorylation of N-acetyl-L-glutamate. The chain is Acetylglutamate kinase from Acinetobacter baylyi (strain ATCC 33305 / BD413 / ADP1).